Reading from the N-terminus, the 345-residue chain is uncharacterized protein (345 aa).

3 Solcar repeats span residues 80–153, 162–246, and 256–339; these read MSFF…MKSR, SDPQ…LKLK, and NLAH…ILNF. The next 6 membrane-spanning stretches (helical) occupy residues 83-103, 128-148, 220-240, 262-282, 296-316, and 319-339; these read FEAL…LFPI, GLGS…TTYE, AGYG…FPIW, AISG…FDVV, VFTI…KGIV, and VLWL…ILNF.

Belongs to the mitochondrial carrier (TC 2.A.29) family.

The protein resides in the mitochondrion inner membrane. This is an uncharacterized protein from Schizosaccharomyces pombe (strain 972 / ATCC 24843) (Fission yeast).